Reading from the N-terminus, the 260-residue chain is 3'-5' ssDNA/RNA exonuclease TatD (260 aa).

The a divalent metal cation site is built by glutamate 92, histidine 128, and histidine 153.

This sequence belongs to the metallo-dependent hydrolases superfamily. TatD-type hydrolase family. TatD subfamily. As to quaternary structure, monomer. It depends on Mg(2+) as a cofactor.

It is found in the cytoplasm. In terms of biological role, 3'-5' exonuclease that prefers single-stranded DNA and RNA. May play a role in the H(2)O(2)-induced DNA damage repair. The sequence is that of 3'-5' ssDNA/RNA exonuclease TatD from Pantoea vagans (strain C9-1) (Pantoea agglomerans (strain C9-1)).